A 145-amino-acid chain; its full sequence is Peptidyl-prolyl cis-trans isomerase (145 aa).

A PPIase cyclophilin-type domain is found at 1–145 (MTQAILETEK…LSVKIVTDAA (145 aa)).

It belongs to the cyclophilin-type PPIase family.

The enzyme catalyses [protein]-peptidylproline (omega=180) = [protein]-peptidylproline (omega=0). In terms of biological role, PPIases accelerate the folding of proteins. It catalyzes the cis-trans isomerization of proline imidic peptide bonds in oligopeptides. This is Peptidyl-prolyl cis-trans isomerase (rot) from Synechococcus elongatus (strain ATCC 33912 / PCC 7942 / FACHB-805) (Anacystis nidulans R2).